A 308-amino-acid chain; its full sequence is Ribose 1,5-bisphosphate isomerase (308 aa).

Substrate-binding positions include 24 to 27 (RGAG) and arginine 67. Cysteine 129 acts as the Proton acceptor in catalysis. Catalysis depends on aspartate 198, which acts as the Proton donor. Substrate is bound by residues 208-209 (NK) and lysine 234.

Belongs to the eIF-2B alpha/beta/delta subunits family. R15P isomerase subfamily.

The enzyme catalyses alpha-D-ribose 1,5-bisphosphate = D-ribulose 1,5-bisphosphate. Functionally, catalyzes the isomerization of ribose 1,5-bisphosphate (R15P) to ribulose 1,5-bisphosphate (RuBP), the CO(2) acceptor and substrate for RubisCO. Functions in an archaeal AMP degradation pathway, together with AMP phosphorylase and RubisCO. The protein is Ribose 1,5-bisphosphate isomerase of Methanocaldococcus jannaschii (strain ATCC 43067 / DSM 2661 / JAL-1 / JCM 10045 / NBRC 100440) (Methanococcus jannaschii).